The chain runs to 305 residues: Spore coat protein CotA (305 aa).

Its subcellular location is the spore coat. It is found in the spore. The protein localises to the perispore. Contributes to maintain proper thickness of the spore coat. May contribute to the formation of polar appendages. May play an important role in assembly of the outer layers of the spore coat. The sequence is that of Spore coat protein CotA from Clostridioides difficile (strain 630) (Peptoclostridium difficile).